A 325-amino-acid chain; its full sequence is MTATATPVPTVASHAQDITLPPPPKGDITTPILFAQDFQKPSTGYMFIKNPPPAGVPYTNIRGEPAMVTVEDLRGKENSVNLDRDSLQVLQGLTDVPRSPEVNWNSVESVEKTFYPAVEAAIKSAIPGAHTVHIFRHGIRHTQNWPVPYNPPAMIAHLDQTGPAAINRVLRHMGPVEGPRLLQGRYRIVHFWTPLNGPVYTCPVAVASSATVKDNDIQIFVSHLGGIGGLDMPLGRPVAKPDASEQYREDFGAPRYANGQRWFYLSGITQDEALLIQIFDSNALQKDSTVQGGRAVHSAFRDPRTPQGAPDRWSIEVSCLVFSDE.

Over residues 1 to 12 (MTATATPVPTVA) the composition is skewed to low complexity. Residues 1-25 (MTATATPVPTVASHAQDITLPPPPK) form a disordered region.

The protein belongs to the asaB hydroxylase/desaturase family.

It participates in secondary metabolite biosynthesis. Hydroxylase/desaturase; part of the gene cluster that mediates the biosynthesis of oxaleimides, cytotoxic compounds containing an unusual disubstituted succinimide moiety. The first step of the pathway is provided by the HR-PKS poxF that serves in a new mode of collaborative biosynthesis with the PKS-NRPS poxE, by providing the olefin containing amino acid substrate via the synthesis of an ACP-bound dec-4-enoate. The cytochrome P450 monooxygenase poxM-catalyzed oxidation at the alpha-position creates the enzyme-bound 2-hydroxydec-4-enoyl-ACP thioester, which may be prone to spontaneous hydrolysis to yield 2-hydroxydec-4-enoic acid due to increased electrophilicity of the carbonyl. 2-hydroxydec-4-enoic acid can then be further oxidized by poxM to yield the alpha-ketoacid 2-oxodec-4-enoicacid, which is reductively aminated by the aminotransferase poxL to yield (S,E)-2-aminodec-4-enoic acid. The Hybrid PKS-NRPS synthetase poxE then performs condensation between the octaketide product of its PKS modules and the amino group of (S,E)-2-aminodec-4-enoic acid which is activated and incorporated by the adenylation domain. The resulting aminoacyl product can be cyclized by the Diels-Alderase PoxQ and reductively released by the reductive (R) domain of poxE to yield an aldehyde intermediate. The released aldehyde is then substrate for a Knoevenagel condensation by the hydrolyase poxO followed by an oxidation at the 5-position of the pyrrolidone ring. The presence of the olefin from the amino acid building block allows for migration of the substituted allyl group to occur. This allylic transposition reaction takes place in a conjugate addition, semipinacol-like fashion to yield a succinimide intermediate. Iterative two-electron oxidations of the C7 methyl of the succinimide intermediate to the carboxylic acid can be catalyzed by one of two remaining cytochrome P450 monooxygenasess poxC or poxD to yield oxaleimide A. Subsequent oxidation yields the maleimide scaffold oxaleimide I. Both oxaleimide A and oxaleimide I can undergo oxidative modifications in the decalin ring to yield the series of products oxaleimides B to H. The protein is Hydroxylase/desaturase poxK of Penicillium oxalicum.